The sequence spans 188 residues: HTH-type transcriptional regulator LmrA (188 aa).

Positions 4-64 constitute an HTH tetR-type domain; sequence GDSREKILSA…IEAVNEMKEY (61 aa). Positions 27–46 form a DNA-binding region, H-T-H motif; it reads GLNQIIKESGAPKGSLYYHF.

Acts as a repressor of the lincomycin-resistance (lmrAB) and yxaGH operons. The protein is HTH-type transcriptional regulator LmrA (lmrA) of Bacillus subtilis (strain 168).